A 421-amino-acid chain; its full sequence is ATP-dependent RNA helicase RhlB (421 aa).

Residues glutamine 9–alanine 37 carry the Q motif motif. The Helicase ATP-binding domain occupies leucine 40 to valine 219. Residue alanine 53 to threonine 60 coordinates ATP. Residues aspartate 165–aspartate 168 carry the DEAD box motif. Positions arginine 245–leucine 390 constitute a Helicase C-terminal domain. The tract at residues proline 386–glycine 421 is disordered. Residues glycine 405 to proline 414 show a composition bias toward low complexity.

This sequence belongs to the DEAD box helicase family. RhlB subfamily. Component of the RNA degradosome, which is a multiprotein complex involved in RNA processing and mRNA degradation.

It is found in the cytoplasm. It carries out the reaction ATP + H2O = ADP + phosphate + H(+). Functionally, DEAD-box RNA helicase involved in RNA degradation. Has RNA-dependent ATPase activity and unwinds double-stranded RNA. This is ATP-dependent RNA helicase RhlB from Enterobacter sp. (strain 638).